We begin with the raw amino-acid sequence, 314 residues long: Methionyl-tRNA formyltransferase (314 aa).

112-115 (SLLP) provides a ligand contact to (6S)-5,6,7,8-tetrahydrofolate.

This sequence belongs to the Fmt family.

The enzyme catalyses L-methionyl-tRNA(fMet) + (6R)-10-formyltetrahydrofolate = N-formyl-L-methionyl-tRNA(fMet) + (6S)-5,6,7,8-tetrahydrofolate + H(+). Functionally, attaches a formyl group to the free amino group of methionyl-tRNA(fMet). The formyl group appears to play a dual role in the initiator identity of N-formylmethionyl-tRNA by promoting its recognition by IF2 and preventing the misappropriation of this tRNA by the elongation apparatus. The polypeptide is Methionyl-tRNA formyltransferase (Legionella pneumophila (strain Paris)).